The chain runs to 180 residues: Signal peptidase complex subunit 3 (180 aa).

Topologically, residues 1-11 are cytoplasmic; the sequence is MNTVLSRANSL. The chain crosses the membrane as a helical; Signal-anchor for type II membrane protein span at residues 12-32; that stretch reads FAFSLSVMAALTFGCFITTAF. Topologically, residues 33 to 180 are lumenal; that stretch reads KERSVPVSIA…PDTYETTKSY (148 aa). Residue Asn-141 is glycosylated (N-linked (GlcNAc...) asparagine).

The protein belongs to the SPCS3 family. Component of the signal peptidase complex paralog A (SPC-A) composed of a catalytic subunit SEC11A and three accessory subunits SPCS1, SPCS2 and SPCS3. Component of the signal peptidase complex paralog C (SPC-C) composed of a catalytic subunit SEC11C and three accessory subunits SPCS1, SPCS2 and SPCS3. The complex induces a local thinning of the ER membrane which is used to measure the length of the signal peptide (SP) h-region of protein substrates. This ensures the selectivity of the complex towards h-regions shorter than 18-20 amino acids. As to expression, expressed in hen oviduct (at protein level).

It is found in the endoplasmic reticulum membrane. Functionally, essential component of the signal peptidase complex (SPC) which catalyzes the cleavage of N-terminal signal sequences from nascent proteins as they are translocated into the lumen of the endoplasmic reticulum. Essential for the SPC catalytic activity, possibly by stabilizing and positioning the active center of the complex close to the lumenal surface. This Gallus gallus (Chicken) protein is Signal peptidase complex subunit 3.